A 361-amino-acid chain; its full sequence is Terpene synthase 6 (361 aa).

The short motif at 81-86 is the DDxx(x)D/E motif element; it reads DDVLDA. The NDxxSxxxD/E motif signature appears at 223-231; sequence NDLVSYEKE.

Belongs to the terpene synthase family.

It carries out the reaction (2E,6E)-farnesyl diphosphate = (2S,3R,6S,9S)-(-)-protoillud-7-ene + diphosphate. Its function is as follows. Terpene synthase that converts its substrate farnesyl diphosphate (FPP) into the sesquiterpene (2S,3R,6S,9S)-(-)-protoillud-7-ene. The chain is Terpene synthase 6 from Dictyostelium discoideum (Social amoeba).